The primary structure comprises 134 residues: Transcription antitermination protein NusB (134 aa).

The protein belongs to the NusB family.

In terms of biological role, involved in transcription antitermination. Required for transcription of ribosomal RNA (rRNA) genes. Binds specifically to the boxA antiterminator sequence of the ribosomal RNA (rrn) operons. This Halalkalibacterium halodurans (strain ATCC BAA-125 / DSM 18197 / FERM 7344 / JCM 9153 / C-125) (Bacillus halodurans) protein is Transcription antitermination protein NusB.